Consider the following 509-residue polypeptide: Histidine ammonia-lyase (509 aa).

The 5-imidazolinone (Ala-Gly) cross-link spans 144-146 (ASG). 2,3-didehydroalanine (Ser) is present on Ser-145.

Belongs to the PAL/histidase family. In terms of processing, contains an active site 4-methylidene-imidazol-5-one (MIO), which is formed autocatalytically by cyclization and dehydration of residues Ala-Ser-Gly.

The protein localises to the cytoplasm. The enzyme catalyses L-histidine = trans-urocanate + NH4(+). It functions in the pathway amino-acid degradation; L-histidine degradation into L-glutamate; N-formimidoyl-L-glutamate from L-histidine: step 1/3. In Pseudoalteromonas atlantica (strain T6c / ATCC BAA-1087), this protein is Histidine ammonia-lyase.